Consider the following 170-residue polypeptide: NADH-ubiquinone oxidoreductase chain 2 (170 aa).

Transmembrane regions (helical) follow at residues 24–44 (LLWM…IMMF), 67–87 (FLIF…GFLP), 101–121 (LFIL…YLRL), and 150–170 (LILN…YMIL).

The protein belongs to the complex I subunit 2 family.

Its subcellular location is the mitochondrion inner membrane. The catalysed reaction is a ubiquinone + NADH + 5 H(+)(in) = a ubiquinol + NAD(+) + 4 H(+)(out). Core subunit of the mitochondrial membrane respiratory chain NADH dehydrogenase (Complex I) that is believed to belong to the minimal assembly required for catalysis. Complex I functions in the transfer of electrons from NADH to the respiratory chain. The immediate electron acceptor for the enzyme is believed to be ubiquinone. In Anopheles albimanus (New world malaria mosquito), this protein is NADH-ubiquinone oxidoreductase chain 2 (ND2).